The sequence spans 588 residues: Succinate dehydrogenase flavoprotein subunit (588 aa).

Residues 14–19 (GAGGAG), 37–52 (SKVF…AQGG), and D221 contribute to the FAD site. H45 is modified (tele-8alpha-FAD histidine). H242 and T254 together coordinate substrate. The Proton acceptor role is filled by R286. Substrate is bound at residue H354. E388 lines the FAD pocket. R399 contributes to the substrate binding site. Residue 404 to 405 (SL) coordinates FAD.

It belongs to the FAD-dependent oxidoreductase 2 family. FRD/SDH subfamily. Part of an enzyme complex containing four subunits: a flavoprotein, an iron-sulfur, cytochrome b-556, and a hydrophobic anchor protein. FAD serves as cofactor.

The protein resides in the cell inner membrane. The catalysed reaction is a quinone + succinate = fumarate + a quinol. The protein operates within carbohydrate metabolism; tricarboxylic acid cycle; fumarate from succinate (bacterial route): step 1/1. In terms of biological role, two distinct, membrane-bound, FAD-containing enzymes are responsible for the catalysis of fumarate and succinate interconversion; the fumarate reductase is used in anaerobic growth, and the succinate dehydrogenase is used in aerobic growth. This is Succinate dehydrogenase flavoprotein subunit (sdhA) from Salmonella typhimurium (strain LT2 / SGSC1412 / ATCC 700720).